The chain runs to 552 residues: Putative transport protein HS_1470 (552 aa).

5 helical membrane passes run isoleucine 4–tryptophan 24, glycine 28–asparagine 48, leucine 67–leucine 87, glycine 95–valine 115, and methionine 157–isoleucine 177. RCK C-terminal domains lie at lysine 190–glutamate 275 and isoleucine 277–asparagine 360. Helical transmembrane passes span methionine 370–isoleucine 390, alanine 402–phenylalanine 424, isoleucine 438–valine 458, leucine 463–isoleucine 483, leucine 495–isoleucine 515, and valine 529–tryptophan 549.

The protein belongs to the AAE transporter (TC 2.A.81) family. YidE subfamily.

The protein localises to the cell membrane. The polypeptide is Putative transport protein HS_1470 (Histophilus somni (strain 129Pt) (Haemophilus somnus)).